The following is a 236-amino-acid chain: 2-C-methyl-D-erythritol 4-phosphate cytidylyltransferase (236 aa).

Belongs to the IspD/TarI cytidylyltransferase family. IspD subfamily. As to quaternary structure, homodimer.

It catalyses the reaction 2-C-methyl-D-erythritol 4-phosphate + CTP + H(+) = 4-CDP-2-C-methyl-D-erythritol + diphosphate. The protein operates within isoprenoid biosynthesis; isopentenyl diphosphate biosynthesis via DXP pathway; isopentenyl diphosphate from 1-deoxy-D-xylulose 5-phosphate: step 2/6. In terms of biological role, catalyzes the formation of 4-diphosphocytidyl-2-C-methyl-D-erythritol from CTP and 2-C-methyl-D-erythritol 4-phosphate (MEP). In Klebsiella pneumoniae subsp. pneumoniae (strain ATCC 700721 / MGH 78578), this protein is 2-C-methyl-D-erythritol 4-phosphate cytidylyltransferase.